Consider the following 206-residue polypeptide: Histidine biosynthesis bifunctional protein HisIE (206 aa).

A phosphoribosyl-AMP cyclohydrolase region spans residues 1 to 117 (MCNEPATSDV…SCFPAAPGQF (117 aa)). A phosphoribosyl-ATP pyrophosphohydrolase region spans residues 118 to 206 (LGALDALVAE…AVTVLEARHR (89 aa)).

In the N-terminal section; belongs to the PRA-CH family. The protein in the C-terminal section; belongs to the PRA-PH family.

The protein resides in the cytoplasm. The enzyme catalyses 1-(5-phospho-beta-D-ribosyl)-ATP + H2O = 1-(5-phospho-beta-D-ribosyl)-5'-AMP + diphosphate + H(+). The catalysed reaction is 1-(5-phospho-beta-D-ribosyl)-5'-AMP + H2O = 1-(5-phospho-beta-D-ribosyl)-5-[(5-phospho-beta-D-ribosylamino)methylideneamino]imidazole-4-carboxamide. The protein operates within amino-acid biosynthesis; L-histidine biosynthesis; L-histidine from 5-phospho-alpha-D-ribose 1-diphosphate: step 2/9. It participates in amino-acid biosynthesis; L-histidine biosynthesis; L-histidine from 5-phospho-alpha-D-ribose 1-diphosphate: step 3/9. In Xylella fastidiosa (strain 9a5c), this protein is Histidine biosynthesis bifunctional protein HisIE (hisI).